Here is a 130-residue protein sequence, read N- to C-terminus: Small ribosomal subunit protein uS8 (130 aa).

Position 88 is an N6-succinyllysine (K88).

It belongs to the universal ribosomal protein uS8 family. Component of the 40S ribosomal subunit. Part of the small subunit (SSU) processome, composed of more than 70 proteins and the RNA chaperone small nucleolar RNA (snoRNA) U3.

It is found in the cytoplasm. The protein resides in the nucleus. Its subcellular location is the nucleolus. Component of the small ribosomal subunit. Part of the small subunit (SSU) processome, first precursor of the small eukaryotic ribosomal subunit. During the assembly of the SSU processome in the nucleolus, many ribosome biogenesis factors, an RNA chaperone and ribosomal proteins associate with the nascent pre-rRNA and work in concert to generate RNA folding, modifications, rearrangements and cleavage as well as targeted degradation of pre-ribosomal RNA by the RNA exosome. Required for proper erythropoiesis. This Pongo abelii (Sumatran orangutan) protein is Small ribosomal subunit protein uS8 (RPS15A).